The chain runs to 449 residues: Phosphoglucosamine mutase (449 aa).

Residue Ser-104 is the Phosphoserine intermediate of the active site. Mg(2+) contacts are provided by Ser-104, Asp-243, Asp-245, and Asp-247. Phosphoserine is present on Ser-104.

It belongs to the phosphohexose mutase family. Requires Mg(2+) as cofactor. Activated by phosphorylation.

The enzyme catalyses alpha-D-glucosamine 1-phosphate = D-glucosamine 6-phosphate. In terms of biological role, catalyzes the conversion of glucosamine-6-phosphate to glucosamine-1-phosphate. In Xanthomonas axonopodis pv. citri (strain 306), this protein is Phosphoglucosamine mutase.